We begin with the raw amino-acid sequence, 704 residues long: MARLVDLDKVRNIGIMAHIDAGKTTTTERILYYTGRLHRMGEVHDGGATMDWMDQEKERGITITSAATTCFWMPKFGNYIGVNHRINIIDTPGHVDFTVEVERSLRVLDGAVALFCAVGGVEPQSETVWRQANKYGVPRIAYINKMDRTGANFFETVKAIRERLGANPVPLQIPIGEGEIFAGFVDLIRMKGIIYNKEDGSTYDEVEIPHDLQNEARTWRINMLEAVSEHDDTLLEKYLNGEDITESEVRNVLRQATLKVTIIPVLCGSSFKNKGVQFMLDAVVEYLASPVDVGAVEGHHPRTEEPVTREPKDEEPFAALAFKIATDPFVGKLTFFRVYSGVLKAGSYVLNTMTGKKERIGRVLQMHSNKREDIDCVYCGDIAAAVGLKDVRTGDTLCDENSPVVLEKMVFPEPVIEIAIEPKTKSDSDRLGMSLAKLAEEDPTFKVKTDDETGQTLIAGMGELHLEILVDRLKREFKVEANVGKPQVAYRETIRKSVEFEGKFVRQSGGKGQFGLVVLRVEPLEEGKGYEFVDAVKGGVIPREYIPAVNAGVQQAMKSGVVAGFPMQDIKVTLLDGKYHEVDSSEMAFKIAGSIGFKGGAKKADPVLLEPIMKVEVVTPDEYLGDVMGDLSSRRGHIEGMGQRAGAQFVNAKVPLSAMFGYSTDLRSMSQGRANYSMEFDCYREVPRSIAEALQEKRTSKDSD.

In terms of domain architecture, tr-type G spans 8–291; that stretch reads DKVRNIGIMA…AVVEYLASPV (284 aa). GTP-binding positions include 17 to 24, 90 to 94, and 144 to 147; these read AHIDAGKT, DTPGH, and NKMD.

It belongs to the TRAFAC class translation factor GTPase superfamily. Classic translation factor GTPase family. EF-G/EF-2 subfamily.

It is found in the cytoplasm. In terms of biological role, catalyzes the GTP-dependent ribosomal translocation step during translation elongation. During this step, the ribosome changes from the pre-translocational (PRE) to the post-translocational (POST) state as the newly formed A-site-bound peptidyl-tRNA and P-site-bound deacylated tRNA move to the P and E sites, respectively. Catalyzes the coordinated movement of the two tRNA molecules, the mRNA and conformational changes in the ribosome. In Pelodictyon phaeoclathratiforme (strain DSM 5477 / BU-1), this protein is Elongation factor G.